The sequence spans 160 residues: Ribosomal RNA large subunit methyltransferase H (160 aa).

S-adenosyl-L-methionine is bound by residues leucine 76 and glycine 108.

Belongs to the RNA methyltransferase RlmH family. As to quaternary structure, homodimer.

It localises to the cytoplasm. The enzyme catalyses pseudouridine(1915) in 23S rRNA + S-adenosyl-L-methionine = N(3)-methylpseudouridine(1915) in 23S rRNA + S-adenosyl-L-homocysteine + H(+). Its function is as follows. Specifically methylates the pseudouridine at position 1915 (m3Psi1915) in 23S rRNA. The chain is Ribosomal RNA large subunit methyltransferase H from Bradyrhizobium sp. (strain BTAi1 / ATCC BAA-1182).